The primary structure comprises 1320 residues: Probable inactive ATP-dependent zinc metalloprotease FTSHI 5, chloroplastic (1320 aa).

The N-terminal 43 residues, 1 to 43 (MDFISASSLSSPFSTQLSPIYLSSGIVSLKPRHRVKNRNFGSR), are a transit peptide targeting the chloroplast. 3 consecutive transmembrane segments (helical) span residues 571–591 (LYLK…WIPM), 633–653 (NIND…IIPY), and 695–715 (FQWF…LYHV). An ATP-binding site is contributed by 824–831 (GERGTGKT).

The protein in the N-terminal section; belongs to the AAA ATPase family. In the C-terminal section; belongs to the peptidase M41 family. Oligomer.

Its subcellular location is the plastid. It localises to the chloroplast membrane. Functionally, required for plastid development during embryogenesis. Might be involved in chaperone functions or play a structural role in the thylakoid FtsH complex. The sequence is that of Probable inactive ATP-dependent zinc metalloprotease FTSHI 5, chloroplastic from Arabidopsis thaliana (Mouse-ear cress).